The primary structure comprises 294 residues: Shikimate dehydrogenase (NADP(+)) (294 aa).

Shikimate contacts are provided by residues 23–25 and Thr70; that span reads SRS. Lys74 acts as the Proton acceptor in catalysis. 2 residues coordinate shikimate: Asn95 and Asp110. Residues 135–139, 159–164, and Met232 contribute to the NADP(+) site; these read GAGGA and NRTASR. Tyr234 contributes to the shikimate binding site. An NADP(+)-binding site is contributed by Gly255.

It belongs to the shikimate dehydrogenase family. As to quaternary structure, homodimer.

The catalysed reaction is shikimate + NADP(+) = 3-dehydroshikimate + NADPH + H(+). The protein operates within metabolic intermediate biosynthesis; chorismate biosynthesis; chorismate from D-erythrose 4-phosphate and phosphoenolpyruvate: step 4/7. Involved in the biosynthesis of the chorismate, which leads to the biosynthesis of aromatic amino acids. Catalyzes the reversible NADPH linked reduction of 3-dehydroshikimate (DHSA) to yield shikimate (SA). The polypeptide is Shikimate dehydrogenase (NADP(+)) (Cupriavidus pinatubonensis (strain JMP 134 / LMG 1197) (Cupriavidus necator (strain JMP 134))).